A 135-amino-acid chain; its full sequence is Ribonuclease P protein component (135 aa).

This sequence belongs to the RnpA family. Consists of a catalytic RNA component (M1 or rnpB) and a protein subunit.

It carries out the reaction Endonucleolytic cleavage of RNA, removing 5'-extranucleotides from tRNA precursor.. RNaseP catalyzes the removal of the 5'-leader sequence from pre-tRNA to produce the mature 5'-terminus. It can also cleave other RNA substrates such as 4.5S RNA. The protein component plays an auxiliary but essential role in vivo by binding to the 5'-leader sequence and broadening the substrate specificity of the ribozyme. The sequence is that of Ribonuclease P protein component from Pseudomonas aeruginosa (strain ATCC 15692 / DSM 22644 / CIP 104116 / JCM 14847 / LMG 12228 / 1C / PRS 101 / PAO1).